Here is a 287-residue protein sequence, read N- to C-terminus: Elongation factor Ts (287 aa).

Residues 80–83 (TDFL) are involved in Mg(2+) ion dislocation from EF-Tu.

The protein belongs to the EF-Ts family.

Its subcellular location is the cytoplasm. Its function is as follows. Associates with the EF-Tu.GDP complex and induces the exchange of GDP to GTP. It remains bound to the aminoacyl-tRNA.EF-Tu.GTP complex up to the GTP hydrolysis stage on the ribosome. The protein is Elongation factor Ts of Pseudomonas fluorescens (strain Pf0-1).